Here is a 200-residue protein sequence, read N- to C-terminus: Holliday junction branch migration complex subunit RuvA (200 aa).

Residues 1-64 (MITSIQGTLV…EDSQTLYGFA (64 aa)) are domain I. The domain II stretch occupies residues 65 to 144 (SPAERDFFRL…ATGAAPGLAT (80 aa)). The segment at 145–151 (QPAAAAS) is flexible linker. The interval 152-200 (PGASAHRDAVAALVALGYRSADADEAVRRASLALGEAATTESLIKKALS) is domain III.

The protein belongs to the RuvA family. In terms of assembly, homotetramer. Forms an RuvA(8)-RuvB(12)-Holliday junction (HJ) complex. HJ DNA is sandwiched between 2 RuvA tetramers; dsDNA enters through RuvA and exits via RuvB. An RuvB hexamer assembles on each DNA strand where it exits the tetramer. Each RuvB hexamer is contacted by two RuvA subunits (via domain III) on 2 adjacent RuvB subunits; this complex drives branch migration. In the full resolvosome a probable DNA-RuvA(4)-RuvB(12)-RuvC(2) complex forms which resolves the HJ.

Its subcellular location is the cytoplasm. In terms of biological role, the RuvA-RuvB-RuvC complex processes Holliday junction (HJ) DNA during genetic recombination and DNA repair, while the RuvA-RuvB complex plays an important role in the rescue of blocked DNA replication forks via replication fork reversal (RFR). RuvA specifically binds to HJ cruciform DNA, conferring on it an open structure. The RuvB hexamer acts as an ATP-dependent pump, pulling dsDNA into and through the RuvAB complex. HJ branch migration allows RuvC to scan DNA until it finds its consensus sequence, where it cleaves and resolves the cruciform DNA. This Opitutus terrae (strain DSM 11246 / JCM 15787 / PB90-1) protein is Holliday junction branch migration complex subunit RuvA.